The sequence spans 414 residues: Tryptophan synthase beta chain (414 aa).

N6-(pyridoxal phosphate)lysine is present on K108.

This sequence belongs to the TrpB family. Tetramer of two alpha and two beta chains. Requires pyridoxal 5'-phosphate as cofactor.

The catalysed reaction is (1S,2R)-1-C-(indol-3-yl)glycerol 3-phosphate + L-serine = D-glyceraldehyde 3-phosphate + L-tryptophan + H2O. It functions in the pathway amino-acid biosynthesis; L-tryptophan biosynthesis; L-tryptophan from chorismate: step 5/5. The beta subunit is responsible for the synthesis of L-tryptophan from indole and L-serine. The sequence is that of Tryptophan synthase beta chain from Beijerinckia indica subsp. indica (strain ATCC 9039 / DSM 1715 / NCIMB 8712).